The sequence spans 155 residues: uncharacterized protein (155 aa).

The first 21 residues, 1–21, serve as a signal peptide directing secretion; the sequence is MFFIVAAGFVIAALIAAIGMA. Residues 35–155 form a disordered region; it reads GQTKPATTRP…PVYRPPEEMV (121 aa). Polar residues predominate over residues 118-128; it reads ATASNTPQNEA.

This is an uncharacterized protein from Schizosaccharomyces pombe (strain 972 / ATCC 24843) (Fission yeast).